The chain runs to 250 residues: Ubiquinone/menaquinone biosynthesis C-methyltransferase UbiE (250 aa).

S-adenosyl-L-methionine contacts are provided by residues serine 73, aspartate 94, and 122–123 (NA).

This sequence belongs to the class I-like SAM-binding methyltransferase superfamily. MenG/UbiE family.

It carries out the reaction a 2-demethylmenaquinol + S-adenosyl-L-methionine = a menaquinol + S-adenosyl-L-homocysteine + H(+). The catalysed reaction is a 2-methoxy-6-(all-trans-polyprenyl)benzene-1,4-diol + S-adenosyl-L-methionine = a 5-methoxy-2-methyl-3-(all-trans-polyprenyl)benzene-1,4-diol + S-adenosyl-L-homocysteine + H(+). Its pathway is quinol/quinone metabolism; menaquinone biosynthesis; menaquinol from 1,4-dihydroxy-2-naphthoate: step 2/2. It functions in the pathway cofactor biosynthesis; ubiquinone biosynthesis. Methyltransferase required for the conversion of demethylmenaquinol (DMKH2) to menaquinol (MKH2) and the conversion of 2-polyprenyl-6-methoxy-1,4-benzoquinol (DDMQH2) to 2-polyprenyl-3-methyl-6-methoxy-1,4-benzoquinol (DMQH2). In Legionella pneumophila (strain Corby), this protein is Ubiquinone/menaquinone biosynthesis C-methyltransferase UbiE.